A 408-amino-acid polypeptide reads, in one-letter code: Imidazolonepropionase (408 aa).

Fe(3+)-binding residues include H74 and H76. H74 and H76 together coordinate Zn(2+). 4-imidazolone-5-propanoate contacts are provided by R83, Y146, and H179. Residue Y146 participates in N-formimidoyl-L-glutamate binding. A Fe(3+)-binding site is contributed by H244. H244 contacts Zn(2+). Residue Q247 coordinates 4-imidazolone-5-propanoate. Residue D319 coordinates Fe(3+). D319 provides a ligand contact to Zn(2+). Residues N321 and G323 each coordinate N-formimidoyl-L-glutamate. T324 contacts 4-imidazolone-5-propanoate.

This sequence belongs to the metallo-dependent hydrolases superfamily. HutI family. The cofactor is Zn(2+). Fe(3+) serves as cofactor.

The protein resides in the cytoplasm. The catalysed reaction is 4-imidazolone-5-propanoate + H2O = N-formimidoyl-L-glutamate. It functions in the pathway amino-acid degradation; L-histidine degradation into L-glutamate; N-formimidoyl-L-glutamate from L-histidine: step 3/3. In terms of biological role, catalyzes the hydrolytic cleavage of the carbon-nitrogen bond in imidazolone-5-propanoate to yield N-formimidoyl-L-glutamate. It is the third step in the universal histidine degradation pathway. This is Imidazolonepropionase from Ralstonia nicotianae (strain ATCC BAA-1114 / GMI1000) (Ralstonia solanacearum).